We begin with the raw amino-acid sequence, 1123 residues long: Probable serine/threonine-protein kinase nek3 (1123 aa).

The Protein kinase domain maps to 4–264 (YEEIKTIGKG…VNDILELPFI (261 aa)). ATP is bound by residues 10 to 18 (IGKGSFGRA) and K33. The active-site Proton acceptor is D130. Low complexity-rich tracts occupy residues 283 to 307 (NNDS…ISSS) and 327 to 415 (NNNN…TSLK). Disordered regions lie at residues 283 to 310 (NNDS…STEV), 325 to 415 (NINN…TSLK), 440 to 802 (SKTP…TNSQ), 866 to 887 (SAST…TNTM), 908 to 937 (SVKL…SITD), and 990 to 1020 (SLNN…NQNN). Residues 440 to 459 (SKTPISGTKNPTTSKITPSI) show a composition bias toward polar residues. Composition is skewed to low complexity over residues 478-529 (SKPT…SSSV), 557-576 (SNLS…SNSQ), 588-617 (SPTS…SLKS), and 642-653 (NGNSNVNSTVLN). Over residues 654 to 665 (RSVSSLSIQHKP) the composition is skewed to polar residues. Low complexity-rich tracts occupy residues 666–696 (TNSG…TSTT), 712–738 (STPT…TPST), and 752–802 (SSNG…TNSQ). The segment covering 908–935 (SVKLSSKSSSPIKTSSSSSSSSSSSSSI) has biased composition (low complexity).

The protein belongs to the protein kinase superfamily. NEK Ser/Thr protein kinase family. NIMA subfamily.

It catalyses the reaction L-seryl-[protein] + ATP = O-phospho-L-seryl-[protein] + ADP + H(+). The catalysed reaction is L-threonyl-[protein] + ATP = O-phospho-L-threonyl-[protein] + ADP + H(+). This chain is Probable serine/threonine-protein kinase nek3 (nek3), found in Dictyostelium discoideum (Social amoeba).